A 159-amino-acid chain; its full sequence is Vesicle transport protein SFT2A (159 aa).

The Cytoplasmic segment spans residues 1–36 (MEKLRRVLSGQDDEEQGLTAQVLDASSLSFNTRLKW). S9 carries the post-translational modification Phosphoserine. A helical transmembrane segment spans residues 37-57 (FVICFVAGIFFSFLGTGLLWL). The Lumenal portion of the chain corresponds to 58–62 (PNGMK). Residues 63–83 (LFAVFYTLGNLAALASTCFLM) traverse the membrane as a helical segment. Residues 84–97 (GPVKQLKKMFETTR) lie on the Cytoplasmic side of the membrane. The chain crosses the membrane as a helical span at residues 98 to 118 (LLATIIMLLCLVFTLCAALWW). The Lumenal segment spans residues 119–122 (RKKG). Residues 123–143 (LALLFCILQFLSMTWYSLSYI) traverse the membrane as a helical segment. Residues 144–159 (PYARDAVLKCCSSLLG) lie on the Cytoplasmic side of the membrane.

It belongs to the SFT2 family.

Its subcellular location is the membrane. Functionally, may be involved in fusion of retrograde transport vesicles derived from an endocytic compartment with the Golgi complex. The sequence is that of Vesicle transport protein SFT2A from Mus musculus (Mouse).